Here is a 265-residue protein sequence, read N- to C-terminus: Glutamate racemase 2 (265 aa).

Substrate is bound by residues 7 to 8 and 39 to 40; these read DS and YG. The active-site Proton donor/acceptor is Cys-70. Residue 71 to 72 coordinates substrate; the sequence is NT. The active-site Proton donor/acceptor is the Cys-182. 183 to 184 is a binding site for substrate; that stretch reads TH.

This sequence belongs to the aspartate/glutamate racemases family.

It catalyses the reaction L-glutamate = D-glutamate. The protein operates within cell wall biogenesis; peptidoglycan biosynthesis. Provides the (R)-glutamate required for cell wall biosynthesis. This Bacillus subtilis (strain 168) protein is Glutamate racemase 2 (yrpC).